The primary structure comprises 637 residues: Chaperone protein HtpG (637 aa).

An a; substrate-binding region spans residues Met1–Arg338. A b region spans residues Glu339–Arg558. Residues Lys493–Gly512 form a disordered region. The tract at residues Phe559–Ile637 is c.

The protein belongs to the heat shock protein 90 family. As to quaternary structure, homodimer.

The protein localises to the cytoplasm. Molecular chaperone. Has ATPase activity. This is Chaperone protein HtpG from Wolbachia sp. subsp. Brugia malayi (strain TRS).